The chain runs to 297 residues: UPF0761 membrane protein VC0395_A2314/VC395_2854 (297 aa).

The next 6 helical transmembrane spans lie at 43-63 (LLSM…FALF), 100-120 (MTAV…SNID), 135-155 (AVFS…LVGA), 181-201 (FLRW…YLLV), 213-233 (LGAL…AAYI), and 245-265 (ALAA…IVLV).

Belongs to the UPF0761 family.

It is found in the cell inner membrane. In Vibrio cholerae serotype O1 (strain ATCC 39541 / Classical Ogawa 395 / O395), this protein is UPF0761 membrane protein VC0395_A2314/VC395_2854.